The chain runs to 129 residues: UPF0225 protein XOO0258 (129 aa).

It belongs to the UPF0225 family.

The chain is UPF0225 protein XOO0258 from Xanthomonas oryzae pv. oryzae (strain MAFF 311018).